The chain runs to 315 residues: beta-hydroxyaspartate dehydratase (315 aa).

N6-(pyridoxal phosphate)lysine is present on lysine 53. Pyridoxal 5'-phosphate-binding positions include asparagine 80, 179–183 (GGGGM), and threonine 303.

Pyridoxal 5'-phosphate is required as a cofactor.

It catalyses the reaction (3S)-3-hydroxy-D-aspartate = iminosuccinate + H2O. Catalyzes the dehydration of (2R,3S)-beta-hydroxyaspartate ((3S)-3-hydroxy-D-aspartate) into iminosuccinate. Is essential for the growth of P.denitrificans in the presence of glycolate and glyoxylate since it functions in glyoxylate assimilation via the beta-hydroxyaspartate cycle (BHAC). In Paracoccus denitrificans (strain Pd 1222), this protein is beta-hydroxyaspartate dehydratase.